The chain runs to 1221 residues: X-linked retinitis pigmentosa GTPase regulator-interacting protein 1 (1221 aa).

2 stretches are compositionally biased toward polar residues: residues 1–15 (MIPT…TQPP) and 88–97 (GGTAPSSTSV). 3 disordered regions span residues 1–22 (MIPT…MTRD), 68–107 (AEAA…SCSS), and 119–196 (SLAS…PEKM). Composition is skewed to basic and acidic residues over residues 134–147 (HRAE…RDRL) and 155–168 (FKEH…RGEV). The stretch at 267–533 (LGAAHNALLS…EEQLKDVAYG (267 aa)) forms a coiled coil. A C2 domain is found at 723–843 (QKDEPRSGTW…AQNKSIQGDF (121 aa)). Positions 869–947 (PENFPKPEAQ…YSRRKHGRKT (79 aa)) are disordered. A compositionally biased stretch (polar residues) spans 903–914 (QMVSIDTPTEAG). Residues 1027–1216 (SEAQTTDSDE…ALQAIYKEMT (190 aa)) form an interaction with RPGR region.

Belongs to the RPGRIP1 family. As to quaternary structure, forms homodimers and elongated homopolymers. Interacts with NPHP4. Interacts with NEK4. Interacts with RPGR. Interacts with SPATA7. Interacts with CEP290/NPHP6; mediating the association between RPGR and CEP290/NPHP6. Retina, brain, skeletal muscle and kidney. Colocalizes with RGPR in the outer segment of rod photoreceptors and cone outer segments.

Its subcellular location is the cell projection. The protein resides in the cilium. Its function is as follows. May function as scaffolding protein. Required for normal location of RPGR at the connecting cilium of photoreceptor cells. Required for normal disk morphogenesis and disk organization in the outer segment of photoreceptor cells and for survival of photoreceptor cells. The polypeptide is X-linked retinitis pigmentosa GTPase regulator-interacting protein 1 (RPGRIP1) (Bos taurus (Bovine)).